The chain runs to 508 residues: Lysine-specific permease LysP (508 aa).

The next 12 helical transmembrane spans lie at 43–63, 66–86, 112–132, 144–164, 184–204, 219–239, 270–290, 314–334, 367–387, 393–413, 436–456, and 467–487; these read SMIA…GDVI, AGPF…YFLM, PAFG…TVAV, WLPD…VFSI, ITVV…IMGG, FVGG…LLVA, IFWR…AIIP, VGFS…VVSA, IPFI…LTSI, FTLL…GIAI, AKLF…VTLG, and WVQG…YLGY.

Belongs to the amino acid-polyamine-organocation (APC) superfamily. Amino acid transporter (AAT) (TC 2.A.3.1) family.

Its subcellular location is the cell membrane. It catalyses the reaction L-lysine(out) + H(+)(out) = L-lysine(in) + H(+)(in). Functionally, permease involved in lysine uptake. This is Lysine-specific permease LysP from Lactococcus lactis subsp. cremoris (strain MG1363).